The sequence spans 446 residues: Bifunctional protein GlmU (446 aa).

The pyrophosphorylase stretch occupies residues 1-228 (MTKTAAVILA…AEELLGVNSR (228 aa)). UDP-N-acetyl-alpha-D-glucosamine is bound by residues 9–12 (LAAG), Lys-23, Gln-72, 77–78 (GT), 100–102 (YGD), Gly-140, Glu-154, Asn-169, and Asn-226. Mg(2+) is bound at residue Asp-102. A Mg(2+)-binding site is contributed by Asn-226. Residues 229–249 (SELAAAEAVIQGRLREKAMEG) are linker. Positions 250–446 (GATLTAPETV…AHMRRLTGKN (197 aa)) are N-acetyltransferase. 2 residues coordinate UDP-N-acetyl-alpha-D-glucosamine: Arg-315 and Lys-333. The active-site Proton acceptor is the His-345. Residues Tyr-348 and Asn-359 each coordinate UDP-N-acetyl-alpha-D-glucosamine. Acetyl-CoA-binding positions include Ala-362, 368 to 369 (NY), Ser-387, Ala-405, and Arg-422.

It in the N-terminal section; belongs to the N-acetylglucosamine-1-phosphate uridyltransferase family. The protein in the C-terminal section; belongs to the transferase hexapeptide repeat family. Homotrimer. Requires Mg(2+) as cofactor.

It localises to the cytoplasm. It carries out the reaction alpha-D-glucosamine 1-phosphate + acetyl-CoA = N-acetyl-alpha-D-glucosamine 1-phosphate + CoA + H(+). The catalysed reaction is N-acetyl-alpha-D-glucosamine 1-phosphate + UTP + H(+) = UDP-N-acetyl-alpha-D-glucosamine + diphosphate. Its pathway is nucleotide-sugar biosynthesis; UDP-N-acetyl-alpha-D-glucosamine biosynthesis; N-acetyl-alpha-D-glucosamine 1-phosphate from alpha-D-glucosamine 6-phosphate (route II): step 2/2. It functions in the pathway nucleotide-sugar biosynthesis; UDP-N-acetyl-alpha-D-glucosamine biosynthesis; UDP-N-acetyl-alpha-D-glucosamine from N-acetyl-alpha-D-glucosamine 1-phosphate: step 1/1. It participates in bacterial outer membrane biogenesis; LPS lipid A biosynthesis. Its function is as follows. Catalyzes the last two sequential reactions in the de novo biosynthetic pathway for UDP-N-acetylglucosamine (UDP-GlcNAc). The C-terminal domain catalyzes the transfer of acetyl group from acetyl coenzyme A to glucosamine-1-phosphate (GlcN-1-P) to produce N-acetylglucosamine-1-phosphate (GlcNAc-1-P), which is converted into UDP-GlcNAc by the transfer of uridine 5-monophosphate (from uridine 5-triphosphate), a reaction catalyzed by the N-terminal domain. The sequence is that of Bifunctional protein GlmU from Rhodospirillum rubrum (strain ATCC 11170 / ATH 1.1.1 / DSM 467 / LMG 4362 / NCIMB 8255 / S1).